Reading from the N-terminus, the 346-residue chain is Guanine nucleotide-binding protein subunit beta-2 (346 aa).

WD repeat units lie at residues 57–96, 99–138, 147–185, 188–227, 230–269, 274–313, and 316–346; these read GHIN…KVQV, LRSA…ASGV, GYEG…KTMD, GHAG…HKQM, GHEM…QIAL, QKNT…HNGM, and GHEN…RLWL.

This sequence belongs to the WD repeat G protein beta family. As to quaternary structure, g proteins are composed of 3 units, alpha, beta and gamma. Interacts with Ggammae/Guanine nucleotide-binding protein subunit gamma-e.

Guanine nucleotide-binding proteins (G proteins) are involved as modulators or transducers in various transmembrane signaling systems. The beta and gamma chains are required for the GTPase activity, for replacement of GDP by GTP, and for G protein-effector interaction. This is Guanine nucleotide-binding protein subunit beta-2 from Calliphora vicina (Blue blowfly).